Reading from the N-terminus, the 856-residue chain is Wall-associated receptor kinase 17 (856 aa).

The signal sequence occupies residues 1-42 (MPSRSPACRPRGRNRRSAADAVARPLALALILVSTLPRAAHS). N171 and N234 each carry an N-linked (GlcNAc...) asparagine glycan. One can recognise an EGF-like 1 domain in the interval 297–334 (FEKLCKYGTCVDAPTGAGYLCKCPSGYDGNPYVSDGCQ). 5 disulfide bridges follow: C301/C306, C319/C333, C339/C353, C347/C362, and C364/C379. The EGF-like 2; calcium-binding domain occupies 335–380 (DINECRNYNSNNCTYQNLCNNTLGGYTCSCPENNIGDGYRTGTGCN). N-linked (GlcNAc...) asparagine glycans are attached at residues N346 and N354. N380 carries an N-linked (GlcNAc...) asparagine glycan. A helical transmembrane segment spans residues 452-470 (VLGVSLVLMVTTTTAASCY). A Protein kinase domain is found at 527-805 (YSESRILGRG…VLQELRRSFT (279 aa)). ATP is bound by residues 533–541 (LGRGGQGTV) and K555. The active-site Proton acceptor is D652. Residues 816-844 (SIQENSEQEEKHLHESRSIPSLQSSEVST) form a disordered region. The span at 823-832 (QEEKHLHESR) shows a compositional bias: basic and acidic residues. The segment covering 833–844 (SIPSLQSSEVST) has biased composition (polar residues).

The protein belongs to the protein kinase superfamily. Ser/Thr protein kinase family. Interacts with WAK17 isoform 2; the interaction is direct. Interacts with LRR5; the interaction is direct. In terms of assembly, interacts with WAK17 isoform 1; the interaction is direct. As to quaternary structure, (Microbial infection) Interacts with G.zeae CFEM1 (via CFEM domain); the interaction is direct. Interacts with G.zeae CFEMN1; the interaction is direct. Interacts with G.zeae CFEM5; the interaction is direct. Mn(2+) is required as a cofactor. Mg(2+) serves as cofactor.

The protein localises to the cell membrane. The catalysed reaction is L-seryl-[protein] + ATP = O-phospho-L-seryl-[protein] + ADP + H(+). It carries out the reaction L-threonyl-[protein] + ATP = O-phospho-L-threonyl-[protein] + ADP + H(+). Functionally, kinase that contributes to activation of the hypersensitive response, a form of programmed cell death, upon fungal infection. Its function is as follows. Secreted protein that contributes to activation of the hypersensitive response, a form of programmed cell death, upon fungal infection. May sense the presence of fungal material and relay the signal to WAK17 isoform 1. In Zea mays (Maize), this protein is Wall-associated receptor kinase 17.